Reading from the N-terminus, the 252-residue chain is Adenosine 5'-phosphosulfate reductase (252 aa).

Residues Cys-125, Cys-126, Cys-208, and Cys-211 each coordinate [4Fe-4S] cluster. The interval 219 to 252 (DGYSREGRWSDRDKTECGLHTSPEDEDGAHAAES) is disordered. A compositionally biased stretch (basic and acidic residues) spans 221 to 235 (YSREGRWSDRDKTEC). Cys-235 (nucleophile; cysteine thiosulfonate intermediate) is an active-site residue.

The protein belongs to the PAPS reductase family. CysH subfamily. [4Fe-4S] cluster serves as cofactor.

The protein resides in the cytoplasm. It catalyses the reaction [thioredoxin]-disulfide + sulfite + AMP + 2 H(+) = adenosine 5'-phosphosulfate + [thioredoxin]-dithiol. It participates in sulfur metabolism; hydrogen sulfide biosynthesis; sulfite from sulfate. Catalyzes the formation of sulfite from adenosine 5'-phosphosulfate (APS) using thioredoxin as an electron donor. The protein is Adenosine 5'-phosphosulfate reductase of Salinibacter ruber (strain DSM 13855 / M31).